We begin with the raw amino-acid sequence, 428 residues long: D-amino acid dehydrogenase (428 aa).

Residue 3–17 (VVILGSGVVGVASAY) coordinates FAD.

This sequence belongs to the DadA oxidoreductase family. The cofactor is FAD.

It catalyses the reaction a D-alpha-amino acid + A + H2O = a 2-oxocarboxylate + AH2 + NH4(+). The protein operates within amino-acid degradation; D-alanine degradation; NH(3) and pyruvate from D-alanine: step 1/1. Oxidative deamination of D-amino acids. The chain is D-amino acid dehydrogenase from Burkholderia cenocepacia (strain ATCC BAA-245 / DSM 16553 / LMG 16656 / NCTC 13227 / J2315 / CF5610) (Burkholderia cepacia (strain J2315)).